Consider the following 301-residue polypeptide: Probable alpha-L-glutamate ligase 1 (301 aa).

The 184-residue stretch at 104-287 (LQLLSRKGIG…VTEPIVEYIE (184 aa)) folds into the ATP-grasp domain. Residues lysine 141, 178–179 (EY), aspartate 187, and 211–213 (RSN) each bind ATP. Mg(2+)-binding residues include aspartate 248, glutamate 260, and asparagine 262. 3 residues coordinate Mn(2+): aspartate 248, glutamate 260, and asparagine 262.

Belongs to the RimK family. The cofactor is Mg(2+). Mn(2+) is required as a cofactor.

The polypeptide is Probable alpha-L-glutamate ligase 1 (Shewanella sp. (strain MR-4)).